A 554-amino-acid polypeptide reads, in one-letter code: CTP synthase (554 aa).

The tract at residues 1-265 (MTPLIFVTGG…DEIVIDQFKL (265 aa)) is amidoligase domain. Serine 13 is a CTP binding site. UTP is bound at residue serine 13. ATP is bound by residues 14–19 (SLGKGI) and aspartate 71. The Mg(2+) site is built by aspartate 71 and glutamate 139. CTP-binding positions include 146–148 (DIE), 186–191 (KTKPTQ), and lysine 222. Residues 186–191 (KTKPTQ) and lysine 222 each bind UTP. One can recognise a Glutamine amidotransferase type-1 domain in the interval 292 to 545 (TIAVVGKYVD…VKASRARKAG (254 aa)). Position 353 (glycine 353) interacts with L-glutamine. Cysteine 380 serves as the catalytic Nucleophile; for glutamine hydrolysis. Residues 381-384 (YGMQ), glutamate 404, and arginine 471 each bind L-glutamine. Residues histidine 518 and glutamate 520 contribute to the active site.

The protein belongs to the CTP synthase family. As to quaternary structure, homotetramer.

It catalyses the reaction UTP + L-glutamine + ATP + H2O = CTP + L-glutamate + ADP + phosphate + 2 H(+). The catalysed reaction is L-glutamine + H2O = L-glutamate + NH4(+). The enzyme catalyses UTP + NH4(+) + ATP = CTP + ADP + phosphate + 2 H(+). It functions in the pathway pyrimidine metabolism; CTP biosynthesis via de novo pathway; CTP from UDP: step 2/2. Allosterically activated by GTP, when glutamine is the substrate; GTP has no effect on the reaction when ammonia is the substrate. The allosteric effector GTP functions by stabilizing the protein conformation that binds the tetrahedral intermediate(s) formed during glutamine hydrolysis. Inhibited by the product CTP, via allosteric rather than competitive inhibition. Functionally, catalyzes the ATP-dependent amination of UTP to CTP with either L-glutamine or ammonia as the source of nitrogen. Regulates intracellular CTP levels through interactions with the four ribonucleotide triphosphates. The protein is CTP synthase of Xylella fastidiosa (strain M12).